The following is a 113-amino-acid chain: MKQFAFPKYERLLKRSEFVQFTNARQRIHTAHFILLWTHTEDSTLKIGITVSRKVGNSVIRNRVKRLVREFYRLNKSRFVMAHYNIIAKKGAEQLDFQRLSRELANVLERLHK.

The protein belongs to the RnpA family. Consists of a catalytic RNA component (M1 or rnpB) and a protein subunit.

The enzyme catalyses Endonucleolytic cleavage of RNA, removing 5'-extranucleotides from tRNA precursor.. Functionally, RNaseP catalyzes the removal of the 5'-leader sequence from pre-tRNA to produce the mature 5'-terminus. It can also cleave other RNA substrates such as 4.5S RNA. The protein component plays an auxiliary but essential role in vivo by binding to the 5'-leader sequence and broadening the substrate specificity of the ribozyme. The sequence is that of Ribonuclease P protein component from Geotalea uraniireducens (strain Rf4) (Geobacter uraniireducens).